The chain runs to 1263 residues: Valine--tRNA ligase (1263 aa).

Position 2 is an N-acetylserine (Ser-2). One can recognise a GST C-terminal domain in the interval 89 to 219; the sequence is GSRAAVLVQQ…YSGARSVTQQ (131 aa). A disordered region spans residues 218–294; it reads QQPGSEVIAP…PGEKKDVSGA (77 aa). Composition is skewed to basic and acidic residues over residues 234-248 and 259-274; these read LKKE…EKFQ and HGEK…KRDP. Positions 343 to 353 match the 'HIGH' region motif; that stretch reads PNVTGSLHLGH. Ser-436 and Ser-526 each carry phosphoserine. Lys-644 is subject to N6-acetyllysine. A 'KMSKS' region motif is present at residues 861–865; sequence KMSKS. Lys-864 is a binding site for ATP.

Belongs to the class-I aminoacyl-tRNA synthetase family. As to quaternary structure, forms high-molecular-mass aggregates with elongation factor 1.

The enzyme catalyses tRNA(Val) + L-valine + ATP = L-valyl-tRNA(Val) + AMP + diphosphate. With respect to regulation, can be regulated by protein kinase C-dependent phosphorylation. The protein is Valine--tRNA ligase (Vars1) of Mus musculus (Mouse).